A 619-amino-acid chain; its full sequence is Grainyhead-like protein 2 homolog (619 aa).

Residues 1 to 90 (MSQETDNKRL…KINEGHEDQD (90 aa)) form a transcription activation region. Disordered regions lie at residues 86 to 108 (HEDQDKRNCLPANETPSNLSTGE), 125 to 147 (NDTVESSNREKYTTSLSESPQPA), and 423 to 444 (EERKQNRKKGKSQAAQAQCNNS). Residues 99 to 108 (ETPSNLSTGE) are compositionally biased toward polar residues. In terms of domain architecture, Grh/CP2 DB spans 239–477 (ASSTFQYTLE…DLDVQPVLFI (239 aa)).

The protein belongs to the grh/CP2 family. Grainyhead subfamily.

The protein localises to the nucleus. The protein resides in the membrane. Its function is as follows. Transcription factor playing an important role in primary neurulation and in epithelial development. Binds directly to the consensus DNA sequence 5'-AACCGGTT-3' acting as an activator and repressor on distinct target genes. The sequence is that of Grainyhead-like protein 2 homolog (grhl2) from Xenopus tropicalis (Western clawed frog).